A 244-amino-acid chain; its full sequence is 6-carboxyhexanoate--CoA ligase (244 aa).

Belongs to the BioW family. As to quaternary structure, homodimer. It depends on Mg(2+) as a cofactor.

The enzyme catalyses heptanedioate + ATP + CoA = 6-carboxyhexanoyl-CoA + AMP + diphosphate. The protein operates within metabolic intermediate metabolism; pimeloyl-CoA biosynthesis; pimeloyl-CoA from pimelate: step 1/1. Its function is as follows. Catalyzes the transformation of pimelate into pimeloyl-CoA with concomitant hydrolysis of ATP to AMP. This Hydrogenobacter thermophilus (strain DSM 6534 / IAM 12695 / TK-6) protein is 6-carboxyhexanoate--CoA ligase.